The chain runs to 702 residues: Choline transporter-like protein 5-A (702 aa).

A helical transmembrane segment spans residues 21-41 (VLCCVLFVIVILGYIALGTVA). Topologically, residues 42–225 (WIHGDPRKVI…KIVEDYASCW (184 aa)) are extracellular. N-linked (GlcNAc...) asparagine glycosylation is found at Asn-120, Asn-173, and Asn-180. The chain crosses the membrane as a helical span at residues 226–246 (YWIVIGLFIALVISLIFILLL). Over 247–249 (RFT) the chain is Cytoplasmic. The chain crosses the membrane as a helical span at residues 250 to 270 (AGFLLWFIIFAVILLVAYGIW). Residues 271–308 (HCYWEFAVLRETPGADVTISDIGFQTDLHVYLQLSQTW) lie on the Extracellular side of the membrane. A helical transmembrane segment spans residues 309-329 (LVFMVTLGLTEASIVLMLIFL). The Cytoplasmic portion of the chain corresponds to 330–334 (RKRVR). Residues 335-355 (IAIALLREGSRAISYIMSALF) traverse the membrane as a helical segment. Residues 356–357 (YP) are Extracellular-facing. Residues 358-378 (IITFVLLAICISYWAMTALFL) traverse the membrane as a helical segment. Residues 379–443 (ASSGDAVYKV…RYIFILQLCN (65 aa)) are Cytoplasmic-facing. A helical membrane pass occupies residues 444–464 (LLVFLWLVNFTIALGQCTVAG). Over 465–498 (AFASYYWARRKPADIPPCPVFSSFSRALRYHTGS) the chain is Extracellular. The chain crosses the membrane as a helical span at residues 499 to 519 (LAFGSLILAVVQLIRVILEYL). Residues 520–593 (DHKLKGAHNA…RVAVLDKVTD (74 aa)) are Cytoplasmic-facing. Residues 594 to 614 (FLLFLGKLLIAGSVGVIAFFL) form a helical membrane-spanning segment. The Extracellular portion of the chain corresponds to 615–632 (FTRKIPIIQEEVPVLNYY). Residues 633-653 (CVPLLTVILGSYLIAHSFFSV) form a helical membrane-spanning segment. Over 654–699 (YAMCVDTLFLCFCEDLERNDGTTAKPFFMSPGLKRILGKAEQSPKK) the chain is Cytoplasmic.

The protein belongs to the CTL (choline transporter-like) family.

It localises to the cell membrane. It carries out the reaction choline(out) + n H(+)(in) = choline(in) + n H(+)(out). Its function is as follows. Choline/H+ antiporter. This Danio rerio (Zebrafish) protein is Choline transporter-like protein 5-A (slc44a5a).